A 335-amino-acid chain; its full sequence is Beta-ketoacyl-[acyl-carrier-protein] synthase III (335 aa).

Catalysis depends on residues Cys120 and His261. Residues 262 to 266 (QANER) form an ACP-binding region. Asn291 is an active-site residue.

This sequence belongs to the thiolase-like superfamily. FabH family. Homodimer.

It is found in the cytoplasm. It catalyses the reaction malonyl-[ACP] + acetyl-CoA + H(+) = 3-oxobutanoyl-[ACP] + CO2 + CoA. Its pathway is lipid metabolism; fatty acid biosynthesis. Catalyzes the condensation reaction of fatty acid synthesis by the addition to an acyl acceptor of two carbons from malonyl-ACP. Catalyzes the first condensation reaction which initiates fatty acid synthesis and may therefore play a role in governing the total rate of fatty acid production. Possesses both acetoacetyl-ACP synthase and acetyl transacylase activities. Its substrate specificity determines the biosynthesis of branched-chain and/or straight-chain of fatty acids. This Chlamydia pneumoniae (Chlamydophila pneumoniae) protein is Beta-ketoacyl-[acyl-carrier-protein] synthase III.